A 393-amino-acid chain; its full sequence is Pyrimidine monooxygenase RutA (393 aa).

FMN is bound by residues 79 to 80, N145, E154, 170 to 171, and S220; these read IK and RY.

This sequence belongs to the NtaA/SnaA/DszA monooxygenase family. RutA subfamily.

It catalyses the reaction uracil + FMNH2 + NADH + O2 = (Z)-3-ureidoacrylate + FMN + NAD(+) + H2O + H(+). The enzyme catalyses thymine + FMNH2 + NADH + O2 = (Z)-2-methylureidoacrylate + FMN + NAD(+) + H2O + H(+). Catalyzes the pyrimidine ring opening between N-3 and C-4 by an unusual flavin hydroperoxide-catalyzed mechanism, adding oxygen atoms in the process to yield ureidoacrylate peracid, that immediately reacts with FMN forming ureidoacrylate and FMN-N(5)-oxide. The FMN-N(5)-oxide reacts spontaneously with NADH to produce FMN. Requires the flavin reductase RutF to regenerate FMN in vivo. The chain is Pyrimidine monooxygenase RutA from Escherichia coli O9:H4 (strain HS).